We begin with the raw amino-acid sequence, 364 residues long: O-methyltransferase 1 (364 aa).

S-adenosyl-L-homocysteine contacts are provided by Ser183, Gly207, Asp230, Asp250, and Lys264. An S-adenosyl-L-methionine-binding site is contributed by Asp230. Residue His268 is the Proton acceptor of the active site.

Belongs to the class I-like SAM-binding methyltransferase superfamily. Cation-independent O-methyltransferase family. As to quaternary structure, homodimer.

It catalyses the reaction dopamine + S-adenosyl-L-methionine = 3-methoxytyramine + S-adenosyl-L-homocysteine + H(+). It carries out the reaction 3,4-dihydroxy-5-methoxyphenethylamine + S-adenosyl-L-methionine = 4-hydroxy-3,5-dimethoxyphenethylamine + S-adenosyl-L-homocysteine + H(+). It functions in the pathway aromatic compound metabolism. The protein operates within alkaloid biosynthesis. In terms of biological role, O-methyltransferase participating in the biosynthesis of natural products derived from phenylethylamine, including mescaline, a natural hallucinogen potentially used in psychotherapeutic treatments. Catalyzes the O-methylation of mescaline meta hydroxyl groups, using dopamine and 3,4-dihydroxy-5-methoxyphenethylamine as substrates. This chain is O-methyltransferase 1, found in Lophophora williamsii (Peyote).